The chain runs to 183 residues: Bifunctional protein PyrR (183 aa).

The PRPP-binding signature appears at 102-114 (VVLVDDVLYTGRT).

This sequence belongs to the purine/pyrimidine phosphoribosyltransferase family. PyrR subfamily. In terms of assembly, homodimer and homohexamer; in equilibrium.

It carries out the reaction UMP + diphosphate = 5-phospho-alpha-D-ribose 1-diphosphate + uracil. Regulates transcriptional attenuation of the pyrimidine nucleotide (pyr) operon by binding in a uridine-dependent manner to specific sites on pyr mRNA. This disrupts an antiterminator hairpin in the RNA and favors formation of a downstream transcription terminator, leading to a reduced expression of downstream genes. In terms of biological role, also displays a weak uracil phosphoribosyltransferase activity which is not physiologically significant. In Listeria monocytogenes serotype 4b (strain CLIP80459), this protein is Bifunctional protein PyrR.